A 285-amino-acid polypeptide reads, in one-letter code: HTH-type transcriptional regulator MurR (285 aa).

The HTH rpiR-type domain maps to 1–77 (MLYLTKIRNA…MALIGEYSAS (77 aa)). The segment at residues 37 to 56 (SRKMAKQLGISQSSIVKFAQ) is a DNA-binding region (H-T-H motif). One can recognise an SIS domain in the interval 128-268 (IIEVISKAPF…FVGLVQLNDV (141 aa)).

Homotetramer.

It participates in amino-sugar metabolism; N-acetylmuramate degradation [regulation]. Its function is as follows. Represses the expression of the murPQ operon involved in the uptake and degradation of N-acetylmuramic acid (MurNAc). Binds to two adjacent inverted repeats within the operator region. MurNAc 6-phosphate, the substrate of MurQ, is the specific inducer that weakens binding of MurR to the operator. This Escherichia coli O7:K1 (strain IAI39 / ExPEC) protein is HTH-type transcriptional regulator MurR.